Reading from the N-terminus, the 102-residue chain is Small ribosomal subunit protein uS10 (102 aa).

This sequence belongs to the universal ribosomal protein uS10 family. Part of the 30S ribosomal subunit.

Involved in the binding of tRNA to the ribosomes. The sequence is that of Small ribosomal subunit protein uS10 from Symbiobacterium thermophilum (strain DSM 24528 / JCM 14929 / IAM 14863 / T).